We begin with the raw amino-acid sequence, 496 residues long: Aspartyl/glutamyl-tRNA(Asn/Gln) amidotransferase subunit B (496 aa).

It belongs to the GatB/GatE family. GatB subfamily. Heterotrimer of A, B and C subunits.

It carries out the reaction L-glutamyl-tRNA(Gln) + L-glutamine + ATP + H2O = L-glutaminyl-tRNA(Gln) + L-glutamate + ADP + phosphate + H(+). It catalyses the reaction L-aspartyl-tRNA(Asn) + L-glutamine + ATP + H2O = L-asparaginyl-tRNA(Asn) + L-glutamate + ADP + phosphate + 2 H(+). Allows the formation of correctly charged Asn-tRNA(Asn) or Gln-tRNA(Gln) through the transamidation of misacylated Asp-tRNA(Asn) or Glu-tRNA(Gln) in organisms which lack either or both of asparaginyl-tRNA or glutaminyl-tRNA synthetases. The reaction takes place in the presence of glutamine and ATP through an activated phospho-Asp-tRNA(Asn) or phospho-Glu-tRNA(Gln). The chain is Aspartyl/glutamyl-tRNA(Asn/Gln) amidotransferase subunit B from Xanthobacter autotrophicus (strain ATCC BAA-1158 / Py2).